A 165-amino-acid chain; its full sequence is Putative ankyrin repeat domain-containing protein 20A5 (165 aa).

3 ANK repeats span residues 66-95 (QHRT…QIDI), 99-128 (ENRT…NPNL), and 132-161 (YGNT…NIEA).

The chain is Putative ankyrin repeat domain-containing protein 20A5 (ANKRD20A5P) from Homo sapiens (Human).